Reading from the N-terminus, the 776-residue chain is ADP-ribosylation factor GTPase-activating protein AGD2 (776 aa).

A BAR domain is found at 2–226 (AGFINLEDSP…IHQVLTYAQQ (225 aa)). Residues 248–267 (QSELDSQQASAKADPSDVGG) are disordered. Residues 290–421 (EVTKQGYLLK…WVNKITAAIT (132 aa)) enclose the PH domain. The Arf-GAP domain maps to 467–604 (DDVLTILREI…ALVVKDEREA (138 aa)). The C4-type zinc-finger motif lies at 482 to 505 (CAECNAPDPDWASLNLGVLMCIEC). ANK repeat units lie at residues 683–712 (QGCS…DINM) and 716–745 (HGRT…RPSI).

As to expression, expressed in roots, hypocotyls, cotyledons, leaf and shoot apical meristems and siliques.

Probable GTPase-activating protein. This Arabidopsis thaliana (Mouse-ear cress) protein is ADP-ribosylation factor GTPase-activating protein AGD2 (AGD2).